Consider the following 213-residue polypeptide: Adenylate kinase (213 aa).

10–15 (GAGKGT) contacts ATP. An NMP region spans residues 30–59 (STGDMFRAAMANQTEMGVLAKSYIDKGDLV). AMP is bound by residues threonine 31, arginine 36, 57–59 (DLV), 86–89 (GYPR), and glutamine 93. An LID region spans residues 127 to 160 (GRIINKKTGETFHKIFNPPVGDYKEEDFYQREDD). ATP-binding positions include arginine 128 and 137–138 (TF). Positions 157 and 168 each coordinate AMP. Lysine 196 is an ATP binding site.

It belongs to the adenylate kinase family. As to quaternary structure, monomer.

It is found in the cytoplasm. The catalysed reaction is AMP + ATP = 2 ADP. It functions in the pathway purine metabolism; AMP biosynthesis via salvage pathway; AMP from ADP: step 1/1. In terms of biological role, catalyzes the reversible transfer of the terminal phosphate group between ATP and AMP. Plays an important role in cellular energy homeostasis and in adenine nucleotide metabolism. The protein is Adenylate kinase of Streptococcus equi subsp. equi (strain 4047).